Here is an 85-residue protein sequence, read N- to C-terminus: Homeobox protein knotted-1-like 8 (85 aa).

Residues 1 to 21 enclose the ELK domain; that stretch reads ELKHQLLRKYGGYLGGLRQEF. The segment at residues 22–85 is a DNA-binding region (homeobox; TALE-type); sequence SKRKKKGKLP…NQRKRHWKPA (64 aa).

This sequence belongs to the TALE/KNOX homeobox family. In terms of tissue distribution, strongly expressed in ear inflorescence primordia and shoot meristem. Weakly expressed in embryos. Absent from leaves.

The protein localises to the nucleus. In terms of biological role, probably binds to the DNA sequence 5'-TGAC-3'. The polypeptide is Homeobox protein knotted-1-like 8 (KNOX8) (Zea mays (Maize)).